The following is a 98-amino-acid chain: MEITDVRLRRVHTEGRMRAIASITMDHEFVVHDIRVIDGNNGLFVAMPSKRTPDGEFRDIAHPISSKTREKIQIAVINEYERVGEYEDAPNYEEAGAS.

It belongs to the SpoVG family.

Its function is as follows. Essential for sporulation. Interferes with or is a negative regulator of the pathway leading to asymmetric septation. The protein is Putative septation protein SpoVG of Shouchella clausii (strain KSM-K16) (Alkalihalobacillus clausii).